A 507-amino-acid chain; its full sequence is Extracellular elastase (507 aa).

A signal peptide spans 1-28; it reads MKNFSKFALTSIAALTVASPLVNTEVDA. Positions 29–207 are excised as a propeptide; that stretch reads KDKVSATQNI…VVDKLNMIKE (179 aa). Position 347 (Asp-347) interacts with Ca(2+). His-351 contributes to the Zn(2+) binding site. Glu-352 is a catalytic residue. Residues His-355 and Glu-375 each coordinate Zn(2+). 9 residues coordinate Ca(2+): Asp-386, Glu-388, Asp-389, Leu-391, Glu-394, Tyr-397, Thr-398, Val-401, and Asp-404. His-435 serves as the catalytic Proton donor.

The protein belongs to the peptidase M4 family. The cofactor is Ca(2+). Zn(2+) is required as a cofactor.

The protein localises to the secreted. Protease that has a low substrate specificity. Glucagon is preferentially cleaved between aromatic (Phe) and hydrophobic (Val) amino acids. Hydrolyzes casein and elastin. The polypeptide is Extracellular elastase (sepA) (Staphylococcus epidermidis (strain ATCC 12228 / FDA PCI 1200)).